We begin with the raw amino-acid sequence, 360 residues long: Phospho-N-acetylmuramoyl-pentapeptide-transferase (360 aa).

The next 10 membrane-spanning stretches (helical) occupy residues 21 to 41 (YITF…LWIG), 73 to 93 (TMGG…WADL), 98 to 118 (VWFV…DDYW), 132 to 152 (WKYF…YAVG), 168 to 188 (FMPQ…VGTS), 199 to 219 (GLAI…AWAT), 236 to 256 (AGEL…FLWY), 263 to 283 (VFMG…IAVL), 288 to 308 (LLLV…ILQV), and 338 to 358 (VIVR…VTLK).

Belongs to the glycosyltransferase 4 family. MraY subfamily. Mg(2+) serves as cofactor.

Its subcellular location is the cell inner membrane. It carries out the reaction UDP-N-acetyl-alpha-D-muramoyl-L-alanyl-gamma-D-glutamyl-meso-2,6-diaminopimeloyl-D-alanyl-D-alanine + di-trans,octa-cis-undecaprenyl phosphate = di-trans,octa-cis-undecaprenyl diphospho-N-acetyl-alpha-D-muramoyl-L-alanyl-D-glutamyl-meso-2,6-diaminopimeloyl-D-alanyl-D-alanine + UMP. Its pathway is cell wall biogenesis; peptidoglycan biosynthesis. In terms of biological role, catalyzes the initial step of the lipid cycle reactions in the biosynthesis of the cell wall peptidoglycan: transfers peptidoglycan precursor phospho-MurNAc-pentapeptide from UDP-MurNAc-pentapeptide onto the lipid carrier undecaprenyl phosphate, yielding undecaprenyl-pyrophosphoryl-MurNAc-pentapeptide, known as lipid I. In Actinobacillus pleuropneumoniae serotype 3 (strain JL03), this protein is Phospho-N-acetylmuramoyl-pentapeptide-transferase.